Reading from the N-terminus, the 120-residue chain is Spermidine export protein MdtJ (120 aa).

4 helical membrane passes run Met-1 to Met-21, Ala-31 to Val-51, Ile-54 to Phe-74, and Glu-81 to Ile-101.

This sequence belongs to the drug/metabolite transporter (DMT) superfamily. Small multidrug resistance (SMR) (TC 2.A.7.1) family. MdtJ subfamily. As to quaternary structure, forms a complex with MdtI.

The protein localises to the cell inner membrane. Catalyzes the excretion of spermidine. This chain is Spermidine export protein MdtJ, found in Salmonella choleraesuis (strain SC-B67).